Reading from the N-terminus, the 208-residue chain is Ribosome maturation factor RimM (208 aa).

One can recognise a PRC barrel domain in the interval 98 to 205; the sequence is ADEFYVPDLI…IIEITPPDGL (108 aa). The tract at residues 154–174 is disordered; that stretch reads LPSKSKRSRDTKNQKKNQSPP.

The protein belongs to the RimM family. Binds ribosomal protein uS19.

Its subcellular location is the cytoplasm. In terms of biological role, an accessory protein needed during the final step in the assembly of 30S ribosomal subunit, possibly for assembly of the head region. Essential for efficient processing of 16S rRNA. May be needed both before and after RbfA during the maturation of 16S rRNA. It has affinity for free ribosomal 30S subunits but not for 70S ribosomes. The chain is Ribosome maturation factor RimM from Trichodesmium erythraeum (strain IMS101).